A 24-amino-acid polypeptide reads, in one-letter code: Outer membrane protein (24 aa).

This sequence belongs to the Gram-negative porin family. Homotrimer.

It is found in the cell outer membrane. Its function is as follows. Forms pores that allow passive diffusion of small molecules across the outer membrane. This Sodalis glossinidius protein is Outer membrane protein.